The following is a 700-amino-acid chain: MSGRRKGCSAATASSSSSSPPSRLPLPGHARRPRRKRCLVPEVFCTRDLADLCVRRDYEGLRRYLRRFEGSCVSLGWPSQCIYVVGGEHSPHSLTEIDLEHCQNDFFGEFRALHLIGTVSHATCRYQVFVDAYGAVFAYDAQEDCLYELASDLAGFFAKGMIRCDPVHESICARLQPNVPLVHPDHRAELCRRSRASARGRYLRSLLAFRELLACEDTAARCAYVEAHREAQLTLIWPEKHSLVLRTARDLGLSASMLRRFQRSLYTREPVMPLGEIEGAEDKTFFHRVRILCGDTGTVYAALVGQDKLVRLSRDLRGFVRVGLALLIDDFRYESIGPVDRSSLYEANPELRLPFKKRRLVVGYFDSLSSLYLRGQPKFSSIWRGLRDAWTHKRPKPRERASGVHLQRYVRATAGRWLPLCWPPLHGIMLGDTQYFGVVRDHKTYRRFSCLRQAGRLYFIGLVSVYECVPDANTAPEIWVSGHGHAFAYLPGEDKVYVLGLSFGEFFENGLFAVYSFFERDYVDEIVEGAWFKHTFAGMYELSQILHDRANLLRVCQLHAGSKIRLGGSPACTFTFGSWNVAEADEANNFVIGVLEQAHFVVIGWMEPVNKAVFMDAHGGIHVLLYGTMLVKLAETLRGFIRQGSFWFRCPRRFCFSPLDSSATVAAKPVSSHTSPAYDVSEYVFSGRSVLDSVSGTGAS.

The disordered stretch occupies residues 1-30 (MSGRRKGCSAATASSSSSSPPSRLPLPGHA). Over residues 9–21 (SAATASSSSSSPP) the composition is skewed to low complexity.

This sequence belongs to the herpesviridae US22 family. As to quaternary structure, interacts with UL38 and host HDAC1; these interactions are necessary for the HDAC1 interaction with UL38. Interacts with host MTA2.

It localises to the virion. The protein resides in the host nucleus. The protein localises to the host cytoplasm. Contributes to activation of immediate-early gene expression. This is Protein UL29/28 (UL29) from Human cytomegalovirus (strain Merlin) (HHV-5).